Here is a 157-residue protein sequence, read N- to C-terminus: Regenerating islet-derived protein 4 (157 aa).

Positions 1-22 (MASKGVRLLLLLSWVAGPEVLS) are cleaved as a signal peptide. A disulfide bridge links Cys-29 with Cys-40. The region spanning 36 to 154 (YRSHCYGYFR…CANRQHFLCK (119 aa)) is the C-type lectin domain. 2 N-linked (GlcNAc...) asparagine glycosylation sites follow: Asn-49 and Asn-62. Disulfide bonds link Cys-57–Cys-153 and Cys-128–Cys-145. Residues 97 to 102 (DPQKKQ) and 134 to 136 (KDK) contribute to the a carbohydrate site.

The protein resides in the secreted. Functionally, calcium-independent lectin displaying mannose-binding specificity and able to maintain carbohydrate recognition activity in an acidic environment. May be involved in inflammatory and metaplastic responses of the gastrointestinal epithelium. In Mus musculus (Mouse), this protein is Regenerating islet-derived protein 4 (Reg4).